We begin with the raw amino-acid sequence, 239 residues long: Putative glutamine amidotransferase-like protein YfeJ (239 aa).

Residues 1-200 (MRVHFVVHES…IQHSQQELAD (200 aa)) form the Glutamine amidotransferase type-1 domain.

This is Putative glutamine amidotransferase-like protein YfeJ (yfeJ) from Salmonella typhimurium (strain LT2 / SGSC1412 / ATCC 700720).